A 238-amino-acid polypeptide reads, in one-letter code: MQLPALQSATLIRRYKRFLADIELPTGDVMTIHCANTGAMTGCGEKGDKIWYSHSDSQTRKYPHSWELTQLANGQLCCINTHRSNQLVFEALQNKQIKELAMYDEIYPEVKYGEENSRIDFLLKGEGLLDCYVEVKSITLVKGNLGMSPDAVTTRGQKHVRELLAMKKQGHRAVVLFAGLHNGFDRFKIAEYIDPEYDRLLKEAMEQGVEAYAYAGQFEISNEIPTALSLTESVSYIK.

This sequence belongs to the SfsA family.

This is Sugar fermentation stimulation protein homolog from Haemophilus influenzae (strain ATCC 51907 / DSM 11121 / KW20 / Rd).